The following is a 297-amino-acid chain: 4-hydroxy-tetrahydrodipicolinate synthase (297 aa).

Thr-46 contributes to the pyruvate binding site. The active-site Proton donor/acceptor is Tyr-134. Lys-162 (schiff-base intermediate with substrate) is an active-site residue. Pyruvate is bound at residue Ile-209.

This sequence belongs to the DapA family. Homotetramer; dimer of dimers.

The protein localises to the cytoplasm. The catalysed reaction is L-aspartate 4-semialdehyde + pyruvate = (2S,4S)-4-hydroxy-2,3,4,5-tetrahydrodipicolinate + H2O + H(+). The protein operates within amino-acid biosynthesis; L-lysine biosynthesis via DAP pathway; (S)-tetrahydrodipicolinate from L-aspartate: step 3/4. Functionally, catalyzes the condensation of (S)-aspartate-beta-semialdehyde [(S)-ASA] and pyruvate to 4-hydroxy-tetrahydrodipicolinate (HTPA). In Methanosphaera stadtmanae (strain ATCC 43021 / DSM 3091 / JCM 11832 / MCB-3), this protein is 4-hydroxy-tetrahydrodipicolinate synthase.